Consider the following 313-residue polypeptide: Protein-glutamine deamidase Cif (313 aa).

Active-site residues include Cys128, His186, and Gln205.

This sequence belongs to the Cif family.

The protein localises to the secreted. The protein resides in the host nucleus. It catalyses the reaction L-glutaminyl-[protein] + H2O = L-glutamyl-[protein] + NH4(+). Protein-glutamine deamidase effector that inhibits the host cell cycle and other key cellular processes such as the actin network and programmed-cell death. Acts by mediating the side chain deamidation of 'Gln-40' of host NEDD8, converting it to glutamate, thereby abolishing the activity of cullin-RING-based E3 ubiquitin-protein ligase complexes (CRL complexes). Inactivation of CRL complexes prevents ubiquitination and subsequent degradation of the cyclin-dependent kinase inhibitors CDKN1A/p21 and CDKN1B/p27, leading to G1 and G2 cell cycle arrests in host cells. Deamidation of 'Gln-40' of host NEDD8 also triggers macrophage-specific programmed cell death. Also able to catalyze deamidation of 'Gln-40' of host ubiquitin in vitro; however, NEDD8 constitutes the preferred substrate in vivo. In Photorhabdus laumondii subsp. laumondii (strain DSM 15139 / CIP 105565 / TT01) (Photorhabdus luminescens subsp. laumondii), this protein is Protein-glutamine deamidase Cif.